The sequence spans 149 residues: Transcriptional repressor NrdR (149 aa).

The segment at 3-34 is a zinc-finger region; sequence CPFCSAVDTKVIDSRLVGEGSSVRRRRQCLVC. In terms of domain architecture, ATP-cone spans 49–139; sequence PRVVKSNDVR…VYRSFEDIKE (91 aa).

It belongs to the NrdR family. Zn(2+) serves as cofactor.

Negatively regulates transcription of bacterial ribonucleotide reductase nrd genes and operons by binding to NrdR-boxes. The polypeptide is Transcriptional repressor NrdR (Enterobacter sp. (strain 638)).